A 469-amino-acid chain; its full sequence is Aspartyl/glutamyl-tRNA(Asn/Gln) amidotransferase subunit B (469 aa).

Belongs to the GatB/GatE family. GatB subfamily. As to quaternary structure, heterotrimer of A, B and C subunits.

The catalysed reaction is L-glutamyl-tRNA(Gln) + L-glutamine + ATP + H2O = L-glutaminyl-tRNA(Gln) + L-glutamate + ADP + phosphate + H(+). It carries out the reaction L-aspartyl-tRNA(Asn) + L-glutamine + ATP + H2O = L-asparaginyl-tRNA(Asn) + L-glutamate + ADP + phosphate + 2 H(+). Its function is as follows. Allows the formation of correctly charged Asn-tRNA(Asn) or Gln-tRNA(Gln) through the transamidation of misacylated Asp-tRNA(Asn) or Glu-tRNA(Gln) in organisms which lack either or both of asparaginyl-tRNA or glutaminyl-tRNA synthetases. The reaction takes place in the presence of glutamine and ATP through an activated phospho-Asp-tRNA(Asn) or phospho-Glu-tRNA(Gln). The chain is Aspartyl/glutamyl-tRNA(Asn/Gln) amidotransferase subunit B from Methanococcus maripaludis (strain DSM 14266 / JCM 13030 / NBRC 101832 / S2 / LL).